Consider the following 342-residue polypeptide: Ribosomal RNA small subunit methyltransferase C (342 aa).

It belongs to the methyltransferase superfamily. RsmC family. Monomer.

It localises to the cytoplasm. It carries out the reaction guanosine(1207) in 16S rRNA + S-adenosyl-L-methionine = N(2)-methylguanosine(1207) in 16S rRNA + S-adenosyl-L-homocysteine + H(+). In terms of biological role, specifically methylates the guanine in position 1207 of 16S rRNA in the 30S particle. In Shewanella sp. (strain MR-7), this protein is Ribosomal RNA small subunit methyltransferase C.